Consider the following 1491-residue polypeptide: CLIP-associating protein (1491 aa).

HEAT repeat units lie at residues 44 to 82 (CTDM…RLGS), 85 to 123 (NAYT…HRVL), 163 to 201 (QLSV…HVGD), and 402 to 440 (DAFC…YTHA). Disordered stretches follow at residues 537–586 (RERE…AVDT) and 600–739 (LYSR…NNPV). The span at 542–551 (GGGGGTGTGT) shows a compositional bias: gly residues. A compositionally biased stretch (polar residues) spans 569–580 (GTLQKPTPSMRS). Phosphoserine occurs at positions 582, 626, and 634. The segment covering 632 to 646 (LNSNSGGTPATTPGS) has biased composition (polar residues). Thr-648 is modified (phosphothreonine). 2 stretches are compositionally biased toward polar residues: residues 657-671 (VSQS…SPST) and 699-712 (PRST…SPTR). 5 positions are modified to phosphoserine: Ser-806, Ser-817, Ser-820, Ser-822, and Ser-824. HEAT repeat units follow at residues 874–912 (QQQL…VHAN) and 955–993 (QLQL…TYCK). Disordered stretches follow at residues 1065–1127 (HMRR…SVEQ) and 1167–1205 (GHLQ…ESAT). Low complexity-rich tracts occupy residues 1070–1097 (SQSC…QSPS), 1111–1124 (LSIS…RQSS), and 1181–1200 (ASLS…QSNT). A phosphoserine mark is found at Ser-1120, Ser-1123, and Ser-1124. 2 HEAT repeats span residues 1289–1327 (NKHF…SNKM) and 1408–1446 (DAHL…VLGE).

The protein belongs to the CLASP family. Interacts with CLIP-190 and microtubules. In terms of tissue distribution, expressed in testis and ovary.

The protein localises to the cytoplasm. It is found in the cytoskeleton. The protein resides in the nucleus. It localises to the microtubule organizing center. Its subcellular location is the centrosome. The protein localises to the spindle. It is found in the cell projection. The protein resides in the growth cone. It localises to the cleavage furrow. Microtubule plus-end tracking protein that promotes the stabilization of dynamic microtubules. Required for several aspects of mitotic spindle formation including the formation of the overlapping central spindle microtubules and kinetochore attachment. Required for the incorporation of tubulin subunits at the plus ends of kinetochore microtubules during poleward microtubule flux. Acts antagonistically to Klp10A and Klp67A to maintain metaphase spindle length. Also required for guidance of CNS axons downstream of Abl. May function to identify a subset of microtubules that probe the peripheral growth cone domain, where guidance signals exert their influence on cytoskeletal organization. Also required during oogenesis for the organization of the polarized microtubule network inside the 16-cell cyst that ensures oocyte differentiation. This is CLIP-associating protein (chb) from Drosophila melanogaster (Fruit fly).